Here is a 568-residue protein sequence, read N- to C-terminus: PCNA-interacting partner (568 aa).

Positions 442–555 (QIPTCVHPAP…RNNKAVSKKL (114 aa)) are disordered. Residues 488-500 (NAWNQTGGKSTQP) are compositionally biased toward polar residues. Residues 515 to 527 (ANRECTEQGREEN) show a composition bias toward basic and acidic residues.

Belongs to the PARI family.

It is found in the cytoplasm. It localises to the nucleus. In terms of biological role, required to suppress inappropriate homologous recombination, thereby playing a central role DNA repair and in the maintenance of genomic stability. The protein is PCNA-interacting partner (parpbp) of Danio rerio (Zebrafish).